The sequence spans 362 residues: Isopentenyl-diphosphate delta-isomerase (362 aa).

6-7 (RK) is a binding site for substrate. FMN is bound by residues 65-67 (SIT), Ser-95, and Asn-124. A substrate-binding site is contributed by 95-97 (SQR). Gln-158 lines the substrate pocket. Glu-159 provides a ligand contact to Mg(2+). FMN-binding positions include Lys-189, Thr-219, 269 to 271 (GVR), and 290 to 291 (AL).

Belongs to the IPP isomerase type 2 family. As to quaternary structure, homooctamer. Dimer of tetramers. FMN serves as cofactor. NADPH is required as a cofactor. It depends on Mg(2+) as a cofactor.

Its subcellular location is the cytoplasm. The catalysed reaction is isopentenyl diphosphate = dimethylallyl diphosphate. In terms of biological role, involved in the biosynthesis of isoprenoids. Catalyzes the 1,3-allylic rearrangement of the homoallylic substrate isopentenyl (IPP) to its allylic isomer, dimethylallyl diphosphate (DMAPP). This chain is Isopentenyl-diphosphate delta-isomerase, found in Methanococcoides burtonii (strain DSM 6242 / NBRC 107633 / OCM 468 / ACE-M).